A 75-amino-acid chain; its full sequence is Small ribosomal subunit protein bS18 (75 aa).

It belongs to the bacterial ribosomal protein bS18 family. Part of the 30S ribosomal subunit. Forms a tight heterodimer with protein bS6.

Its function is as follows. Binds as a heterodimer with protein bS6 to the central domain of the 16S rRNA, where it helps stabilize the platform of the 30S subunit. This chain is Small ribosomal subunit protein bS18, found in Mycoplasma capricolum subsp. capricolum (strain California kid / ATCC 27343 / NCTC 10154).